We begin with the raw amino-acid sequence, 928 residues long: DNA mismatch repair protein MutS (928 aa).

613 to 620 contributes to the ATP binding site; that stretch reads GPNMAGKS. Residues 854-872 are compositionally biased toward basic and acidic residues; sequence KAKSNKDDHRIDEKTENSS. The disordered stretch occupies residues 854–880; the sequence is KAKSNKDDHRIDEKTENSSKKHKNKDS.

The protein belongs to the DNA mismatch repair MutS family.

Functionally, this protein is involved in the repair of mismatches in DNA. It is possible that it carries out the mismatch recognition step. This protein has a weak ATPase activity. This Clostridium beijerinckii (strain ATCC 51743 / NCIMB 8052) (Clostridium acetobutylicum) protein is DNA mismatch repair protein MutS.